The sequence spans 426 residues: Inhibin beta A chain (426 aa).

The signal sequence occupies residues 1–20 (MPLLWLRGFLLASCWIIVRS). Residues 21-310 (SPTPGSEGHS…EDHPHRRRRR (290 aa)) constitute a propeptide that is removed on maturation. N-linked (GlcNAc...) asparagine glycosylation is present at asparagine 165. Residues 259 to 288 (KKKKKEEEGEGKKKGGGEGGAGADEEKEQS) are disordered. Positions 263–274 (KEEEGEGKKKGG) are enriched in basic and acidic residues. 4 cysteine pairs are disulfide-bonded: cysteine 314/cysteine 322, cysteine 321/cysteine 391, cysteine 350/cysteine 423, and cysteine 354/cysteine 425.

Belongs to the TGF-beta family. Dimeric, linked by one or more disulfide bonds. Inhibin A is a dimer of alpha/INHA and beta-A/INHBA. Activin A is a homodimer of beta-A/INHBA. Activin AB is a dimer of beta-A/INHBA and beta-B/INHBB. Interacts with FST and FSTL3; these interactions prevent activin A interaction to its type II receptor. Activin A interacts with ACVR2A. Activin A interacts with BMPR2. Inhibin A interacts with ACVR1; this interaction creates a non-signaling complex (NSC) that inhibits ACVR1-mediated BMP signaling. Inhibin A interacts with ACVR2A.

It localises to the secreted. In terms of biological role, inhibins/activins are involved in regulating a number of diverse functions such as hypothalamic and pituitary hormone secretion, gonadal hormone secretion, germ cell development and maturation, erythroid differentiation, insulin secretion, nerve cell survival, embryonic axial development or bone growth, depending on their subunit composition. Its function is as follows. Activin A is a homodimer of INHBA that plays a role in several essential biological processes including embryonic development, stem cell maintenance and differentiation, haematopoiesis, cell proliferation and tissue fibrosis. Signals through type I (such as ACVR1B or ACVR1C) and type II receptors (such as ACVR2A, ACVR2B or BMPR2) which, upon ligand binding, phosphorylate SMAD2 and SMAD3 intracellular signaling mediators that form a complex with SMAD4, translocate to the nucleus and modulate gene expression. Can also activate alternative non-canonical intracellular signaling pathways including the p38 MAPK, extracellular signal-regulated kinases 1/2 (ERK1/2) and c-Jun N-terminal kinases (JNKs) to modulate cell migration and differentiation. Alternatively, promotes osteoblastic differentiation via ACVRL1-SMAD1/5/9 pathway. In addition, can engage the type I receptor ACVR1 to form an ACVR1-activin A-type II receptor non-signaling complex (NSC) that renders receptors unavailable for engagement with BMPs, hence resulting in an apparent inhibition of ACVR1-mediated BMP signaling. Functionally, inhibin A is a dimer of alpha/INHA and beta-A/INHBA that functions as a feedback regulator in the hypothalamic-pituitary-gonadal (HPG) axis. Inhibits the secretion of FSH from the anterior pituitary gland by acting on pituitary gonadotrope cells. Antagonizes activin A by binding to the proteoglycan, betaglycan, and forming a stable complex with and, thereby, sequestering type II activin receptors while excluding type I receptor. In Homo sapiens (Human), this protein is Inhibin beta A chain (INHBA).